Reading from the N-terminus, the 216-residue chain is Ras-related protein RabN1 (216 aa).

Residue 15 to 22 (GDYNSGKT) participates in GTP binding. The Effector region motif lies at 37 to 44 (TCPSTFDL). Residues 62–66 (DTAGQ) and 128–131 (TKSD) each bind GTP. A lipid anchor (S-geranylgeranyl cysteine) is attached at cysteine 216.

The protein belongs to the small GTPase superfamily. Rab family.

Its subcellular location is the cell membrane. This chain is Ras-related protein RabN1 (rabN1), found in Dictyostelium discoideum (Social amoeba).